We begin with the raw amino-acid sequence, 205 residues long: Large ribosomal subunit protein uL3 (205 aa).

The segment at 126 to 150 is disordered; sequence GGPKTHGQSDRHRAPGSIGSTTTPG.

It belongs to the universal ribosomal protein uL3 family. In terms of assembly, part of the 50S ribosomal subunit. Forms a cluster with proteins L14 and L19.

Functionally, one of the primary rRNA binding proteins, it binds directly near the 3'-end of the 23S rRNA, where it nucleates assembly of the 50S subunit. The sequence is that of Large ribosomal subunit protein uL3 from Dehalococcoides mccartyi (strain ATCC BAA-2100 / JCM 16839 / KCTC 5957 / BAV1).